The primary structure comprises 328 residues: Transcriptional regulator protein Pur-beta-B (328 aa).

Disordered regions lie at residues 1–35, 100–124, and 289–328; these read MADGDSGSERGGSSGGPSGFSQHMSREQETQELAS, SPEQIAQASGEDGAGGPGGPRRALK, and QERQRDKMYDRRGPGERGGSLGPGAGGGGDDSETEDVDDD. At Ala-2 the chain carries N-acetylalanine. Positions 9 to 18 are enriched in gly residues; it reads ERGGSSGGPS. Over residues 24-35 the composition is skewed to basic and acidic residues; the sequence is MSREQETQELAS. Residues 27–260 are DNA-binding; sequence EQETQELASK…LRVSEVKPSY (234 aa). The span at 289 to 303 shows a compositional bias: basic and acidic residues; it reads QERQRDKMYDRRGPG. The span at 304–317 shows a compositional bias: gly residues; it reads ERGGSLGPGAGGGG. The span at 318–328 shows a compositional bias: acidic residues; it reads DDSETEDVDDD.

The protein belongs to the PUR DNA-binding protein family.

Its subcellular location is the nucleus. Its function is as follows. Transcriptional regulator which can act as an activator or a repressor. The sequence is that of Transcriptional regulator protein Pur-beta-B (purb-b) from Xenopus laevis (African clawed frog).